A 365-amino-acid chain; its full sequence is Phospho-N-acetylmuramoyl-pentapeptide-transferase (365 aa).

The next 10 membrane-spanning stretches (helical) occupy residues 15 to 35, 51 to 71, 96 to 116, 121 to 141, 156 to 176, 180 to 200, 217 to 237, 238 to 258, 279 to 299, and 344 to 364; these read PSGT…AVLI, VPVL…VPLL, TMGG…FAGF, IAVA…DWQV, LILQ…TAPE, ITFF…LAGF, GLAG…ALPA, HPGL…FIYH, LAAA…SGIF, and TQIV…SFIL.

Belongs to the glycosyltransferase 4 family. MraY subfamily. The cofactor is Mg(2+).

The protein resides in the cell inner membrane. It carries out the reaction UDP-N-acetyl-alpha-D-muramoyl-L-alanyl-gamma-D-glutamyl-meso-2,6-diaminopimeloyl-D-alanyl-D-alanine + di-trans,octa-cis-undecaprenyl phosphate = di-trans,octa-cis-undecaprenyl diphospho-N-acetyl-alpha-D-muramoyl-L-alanyl-D-glutamyl-meso-2,6-diaminopimeloyl-D-alanyl-D-alanine + UMP. The protein operates within cell wall biogenesis; peptidoglycan biosynthesis. Its function is as follows. Catalyzes the initial step of the lipid cycle reactions in the biosynthesis of the cell wall peptidoglycan: transfers peptidoglycan precursor phospho-MurNAc-pentapeptide from UDP-MurNAc-pentapeptide onto the lipid carrier undecaprenyl phosphate, yielding undecaprenyl-pyrophosphoryl-MurNAc-pentapeptide, known as lipid I. This chain is Phospho-N-acetylmuramoyl-pentapeptide-transferase, found in Picosynechococcus sp. (strain ATCC 27264 / PCC 7002 / PR-6) (Agmenellum quadruplicatum).